A 264-amino-acid polypeptide reads, in one-letter code: Proteasome subunit alpha type-4 (264 aa).

It belongs to the peptidase T1A family. As to quaternary structure, the 26S proteasome consists of a 20S proteasome core and two 19S regulatory subunits. The 20S proteasome core is composed of 28 subunits that are arranged in four stacked rings, resulting in a barrel-shaped structure. The two end rings are each formed by seven alpha subunits, and the two central rings are each formed by seven beta subunits. The catalytic chamber with the active sites is on the inside of the barrel. Interacts with PI31.

It is found in the cytoplasm. The protein localises to the nucleus. Its function is as follows. The proteasome is a multicatalytic proteinase complex which is characterized by its ability to cleave peptides with Arg, Phe, Tyr, Leu, and Glu adjacent to the leaving group at neutral or slightly basic pH. The proteasome has an ATP-dependent proteolytic activity. This chain is Proteasome subunit alpha type-4 (Prosalpha3), found in Drosophila melanogaster (Fruit fly).